A 701-amino-acid chain; its full sequence is A-type ATP synthase subunit I (701 aa).

10 helical membrane passes run 340-360, 363-379, 388-408, 435-455, 468-488, 498-518, 555-575, 583-603, 612-632, and 649-669; these read WEIS…GLMF, FGNA…FYRY, IPKL…TGLL, LYNL…LLPF, MIFS…LGVI, FLFL…FIFM, GIVW…AILV, WGSA…LLLL, VLVF…MAYL, and IIIL…VVFI.

Belongs to the V-ATPase 116 kDa subunit family. Has multiple subunits with at least A(3), B(3), C, D, E, F, H, I and proteolipid K(x).

The protein localises to the cell membrane. In terms of biological role, component of the A-type ATP synthase that produces ATP from ADP in the presence of a proton gradient across the membrane. In Saccharolobus solfataricus (strain ATCC 35092 / DSM 1617 / JCM 11322 / P2) (Sulfolobus solfataricus), this protein is A-type ATP synthase subunit I.